A 390-amino-acid polypeptide reads, in one-letter code: Putative glutamate--cysteine ligase 2 (390 aa).

Belongs to the glutamate--cysteine ligase type 2 family. YbdK subfamily.

The enzyme catalyses L-cysteine + L-glutamate + ATP = gamma-L-glutamyl-L-cysteine + ADP + phosphate + H(+). Functionally, ATP-dependent carboxylate-amine ligase which exhibits weak glutamate--cysteine ligase activity. The protein is Putative glutamate--cysteine ligase 2 of Chloroflexus aggregans (strain MD-66 / DSM 9485).